Consider the following 549-residue polypeptide: Cytoplasmic trehalase (549 aa).

Substrate contacts are provided by residues Arg-168, 175-176 (WD), Asn-212, 221-223 (RSQ), 292-294 (RDE), and Gly-324. Catalysis depends on proton donor/acceptor residues Asp-326 and Glu-509. Glu-525 provides a ligand contact to substrate.

Belongs to the glycosyl hydrolase 37 family. In terms of assembly, monomer.

Its subcellular location is the cytoplasm. It carries out the reaction alpha,alpha-trehalose + H2O = alpha-D-glucose + beta-D-glucose. It functions in the pathway glycan degradation; trehalose degradation; D-glucose from alpha,alpha-trehalose: step 1/1. Hydrolyzes trehalose to glucose. Could be involved, in cells returning to low osmolarity conditions, in the utilization of the accumulated cytoplasmic trehalose, which was synthesized in response to high osmolarity. The protein is Cytoplasmic trehalase of Salmonella arizonae (strain ATCC BAA-731 / CDC346-86 / RSK2980).